The sequence spans 496 residues: Cytochrome P450 71A15 (496 aa).

The helical transmembrane segment at 3–23 threads the bilayer; that stretch reads IIIISLCLATILAFLLLKPLL. Residue Cys439 coordinates heme.

Belongs to the cytochrome P450 family. Heme is required as a cofactor.

The protein localises to the membrane. This Arabidopsis thaliana (Mouse-ear cress) protein is Cytochrome P450 71A15 (CYP71A15).